A 342-amino-acid chain; its full sequence is Cytochrome f (342 aa).

A signal peptide spans 1-28 (MKKQWIAGAFGLTAALAGLVSVPQSALA). Residues Cys48, Cys51, and His52 each contribute to the heme site. The chain crosses the membrane as a helical span at residues 305–325 (VTWLVAFLAAAFICQLLLVLK).

This sequence belongs to the cytochrome f family. The 4 large subunits of the cytochrome b6-f complex are cytochrome b6, subunit IV (17 kDa polypeptide, PetD), cytochrome f and the Rieske protein, while the 4 small subunits are PetG, PetL, PetM and PetN. The complex functions as a dimer. Heme serves as cofactor.

The protein localises to the cell inner membrane. Functionally, component of the cytochrome b6-f complex, which mediates electron transfer between photosystem II (PSII) and photosystem I (PSI), cyclic electron flow around PSI, and state transitions. The chain is Cytochrome f (petA) from Gloeobacter violaceus (strain ATCC 29082 / PCC 7421).